The sequence spans 211 residues: Probable oligoribonuclease (211 aa).

The Exonuclease domain maps to 38–202 (IVWMDLEMTG…DDIRESIKEL (165 aa)). Tyr-159 is an active-site residue.

The protein belongs to the oligoribonuclease family.

Functionally, 3'-to-5' exoribonuclease specific for small oligoribonucleotides. The protein is Probable oligoribonuclease of Drosophila melanogaster (Fruit fly).